Consider the following 132-residue polypeptide: Myelin P2 protein (132 aa).

N-acetylserine is present on serine 2. A (9Z)-octadecenoate-binding site is contributed by arginine 107. Residue arginine 107 coordinates hexadecanoate. Residues cysteine 118 and cysteine 125 are joined by a disulfide bond. Residue 127–129 coordinates (9Z)-octadecenoate; that stretch reads RIY. 127 to 129 is a binding site for hexadecanoate; that stretch reads RIY.

It belongs to the calycin superfamily. Fatty-acid binding protein (FABP) family. Monomer. As to expression, detected in spinal cord (at protein level).

Its subcellular location is the cytoplasm. May play a role in lipid transport protein in Schwann cells. May bind cholesterol. The protein is Myelin P2 protein (PMP2) of Equus caballus (Horse).